The following is a 309-amino-acid chain: Malate dehydrogenase (309 aa).

Residues 9-14 (GAGFVG) and Asp-33 each bind NAD(+). Substrate contacts are provided by Arg-82 and Arg-88. Residues Asn-95 and 118–120 (VNN) each bind NAD(+). Residues Asn-120 and Arg-151 each contribute to the substrate site. Catalysis depends on His-175, which acts as the Proton acceptor.

The protein belongs to the LDH/MDH superfamily. MDH type 3 family. As to quaternary structure, homotetramer (active enzyme); homodimer and homotrimer at temperatures lower than 55 degrees Celsius (inactive forms).

The enzyme catalyses (S)-malate + NAD(+) = oxaloacetate + NADH + H(+). Its function is as follows. Catalyzes the reversible oxidation of malate to oxaloacetate. The protein is Malate dehydrogenase of Chloroflexus aurantiacus (strain ATCC 29366 / DSM 635 / J-10-fl).